A 509-amino-acid chain; its full sequence is Lysine--tRNA ligase (509 aa).

2 residues coordinate Mg(2+): E395 and E402.

This sequence belongs to the class-II aminoacyl-tRNA synthetase family. As to quaternary structure, homodimer. Mg(2+) serves as cofactor.

It is found in the cytoplasm. The catalysed reaction is tRNA(Lys) + L-lysine + ATP = L-lysyl-tRNA(Lys) + AMP + diphosphate. The polypeptide is Lysine--tRNA ligase (Fervidobacterium nodosum (strain ATCC 35602 / DSM 5306 / Rt17-B1)).